Reading from the N-terminus, the 400-residue chain is Nicotinate phosphoribosyltransferase (400 aa).

Position 220 is a phosphohistidine; by autocatalysis (H220).

This sequence belongs to the NAPRTase family. Transiently phosphorylated on a His residue during the reaction cycle. Phosphorylation strongly increases the affinity for substrates and increases the rate of nicotinate D-ribonucleotide production. Dephosphorylation regenerates the low-affinity form of the enzyme, leading to product release.

It carries out the reaction nicotinate + 5-phospho-alpha-D-ribose 1-diphosphate + ATP + H2O = nicotinate beta-D-ribonucleotide + ADP + phosphate + diphosphate. It functions in the pathway cofactor biosynthesis; NAD(+) biosynthesis; nicotinate D-ribonucleotide from nicotinate: step 1/1. Its function is as follows. Catalyzes the synthesis of beta-nicotinate D-ribonucleotide from nicotinate and 5-phospho-D-ribose 1-phosphate at the expense of ATP. This is Nicotinate phosphoribosyltransferase from Salmonella typhimurium (strain LT2 / SGSC1412 / ATCC 700720).